The following is a 95-amino-acid chain: Large ribosomal subunit protein uL23c (95 aa).

The protein belongs to the universal ribosomal protein uL23 family. As to quaternary structure, part of the 50S ribosomal subunit.

The protein localises to the plastid. Its subcellular location is the chloroplast. In terms of biological role, binds to 23S rRNA. This is Large ribosomal subunit protein uL23c (rpl23) from Guillardia theta (Cryptophyte).